Here is a 775-residue protein sequence, read N- to C-terminus: Zinc finger protein GLIS3 (775 aa).

Disordered stretches follow at residues 121 to 147 (TESSHSPYPSPRHSSTRSHSARSKKRA) and 282 to 314 (PGSTVDLPPAPPLPPLPPPPGPPPPYHAHAHLH). Over residues 123-133 (SSHSPYPSPRH) the composition is skewed to low complexity. Residues 134–147 (SSTRSHSARSKKRA) show a composition bias toward basic residues. Positions 289 to 307 (PPAPPLPPLPPPPGPPPPY) are enriched in pro residues. The segment at 345–370 (HCCRWIDCSALYDQQEELVRHIEKVH) adopts a C2H2-type 1 zinc-finger fold. The C2H2-type 2; atypical zinc finger occupies 379 to 406 (FTCFWAGCPRRYKPFNARYKLLIHMRVH). 3 C2H2-type zinc fingers span residues 412–436 (NKCTFEGCEKAFSRLENLKIHLRSH), 442–466 (YLCQHPGCQKAFSNSSDRAKHQRTH), and 472–496 (YACQIPGCTKRYTDPSSLRKHVKAH). 2 disordered regions span residues 485 to 512 (DPSSLRKHVKAHSSKEQQARKKLRSSTE) and 529 to 665 (PATS…QPNG). The short motif at 491 to 507 (KHVKAHSSKEQQARKKL) is the Bipartite nuclear localization signal element. Basic and acidic residues predominate over residues 497 to 512 (SSKEQQARKKLRSSTE). 3 stretches are compositionally biased toward polar residues: residues 557 to 567 (IFSSNYSSRSG), 588 to 600 (VQGSPHNPSSQLP), and 632 to 663 (SILQRTQPPYTQQPSGSHLKSYQPETNSSFQP).

This sequence belongs to the GLI C2H2-type zinc-finger protein family. In terms of tissue distribution, in the adult, expressed at high levels in the kidney and at lower levels in the brain, skeletal muscle, pancreas, liver, lung, thymus and ovary.

The protein resides in the nucleus. In terms of biological role, acts both as a repressor and an activator of transcription. Binds to the consensus sequence 5'-GACCACCCAC-3'. This Homo sapiens (Human) protein is Zinc finger protein GLIS3 (GLIS3).